The primary structure comprises 142 residues: SsrA-binding protein (142 aa).

This sequence belongs to the SmpB family.

It localises to the cytoplasm. In terms of biological role, required for rescue of stalled ribosomes mediated by trans-translation. Binds to transfer-messenger RNA (tmRNA), required for stable association of tmRNA with ribosomes. tmRNA and SmpB together mimic tRNA shape, replacing the anticodon stem-loop with SmpB. tmRNA is encoded by the ssrA gene; the 2 termini fold to resemble tRNA(Ala) and it encodes a 'tag peptide', a short internal open reading frame. During trans-translation Ala-aminoacylated tmRNA acts like a tRNA, entering the A-site of stalled ribosomes, displacing the stalled mRNA. The ribosome then switches to translate the ORF on the tmRNA; the nascent peptide is terminated with the 'tag peptide' encoded by the tmRNA and targeted for degradation. The ribosome is freed to recommence translation, which seems to be the essential function of trans-translation. The protein is SsrA-binding protein of Mycoplasma mobile (strain ATCC 43663 / 163K / NCTC 11711) (Mesomycoplasma mobile).